The primary structure comprises 344 residues: Lysophosphatidic acid receptor 6 (344 aa).

At 1–25 (MVSSNGSQCPYDDSFKYTLYGCMFS) the chain is on the extracellular side. N-linked (GlcNAc...) asparagine glycosylation occurs at Asn5. A helical membrane pass occupies residues 26–46 (MVFVLGLISNCVAIYIFICAL). The Cytoplasmic segment spans residues 47–56 (KVRNETTTYM). The helical transmembrane segment at 57–77 (INLAMSDLLFVFTLPFRIFYF) threads the bilayer. At 78–90 (ATRNWPFGDLLCK) the chain is on the extracellular side. Residues Cys89 and Cys168 are joined by a disulfide bond. The helical transmembrane segment at 91 to 111 (ISVMLFYTNMYGSILFLTCIS) threads the bilayer. At 112 to 134 (VDRFLAIVYPFKSKTLRTKRNAK) the chain is on the cytoplasmic side. A helical membrane pass occupies residues 135–155 (IVCIAVWFTVMGGSAPAVFFQ). At 156–183 (STHSQGNNTSEACFENFPAATWKTYLSR) the chain is on the extracellular side. N-linked (GlcNAc...) asparagine glycans are attached at residues Asn162 and Asn163. Residues 184–204 (IVIFIEIVGFFIPLILNVTCS) form a helical membrane-spanning segment. Residues 205–230 (SMVLRTLNKPVTLSRSKMNKTKVLKM) are Cytoplasmic-facing. The helical transmembrane segment at 231–251 (IFVHLVIFCFCFVPYNINLIL) threads the bilayer. The Extracellular segment spans residues 252 to 272 (YSLMRTQTFVNCSVVAAVRTM). Asn262 is a glycosylation site (N-linked (GlcNAc...) asparagine). Residues 273 to 293 (YPITLCIAVSNCCFDPIVYYF) form a helical membrane-spanning segment. Residue Cys284 is the site of S-palmitoyl cysteine attachment. Residues 294 to 344 (TSDTIQNSIKMKNWSVRRSDSRFSEVQGTENFIQHNLQTLKNKIFDNESAI) are Cytoplasmic-facing.

It belongs to the G-protein coupled receptor 1 family. As to expression, ubiquitously expressed. Detected in the hair follicles and skin (at protein level).

Its subcellular location is the cell membrane. Its function is as follows. Binds to oleoyl-L-alpha-lysophosphatidic acid (LPA). Intracellular cAMP is involved in the receptor activation. Important for the maintenance of hair growth and texture. The protein is Lysophosphatidic acid receptor 6 (Lpar6) of Mus musculus (Mouse).